Reading from the N-terminus, the 277-residue chain is Secoisolariciresinol dehydrogenase (277 aa).

NAD(+) contacts are provided by residues 24–29 (GGASGI), D48, V73, and N99. S163 lines the substrate pocket. Y166 functions as the Proton donor/acceptor in the catalytic mechanism. An NAD(+)-binding site is contributed by K170.

It belongs to the short-chain dehydrogenases/reductases (SDR) family. Homotetramer.

It carries out the reaction (-)-secoisolariciresinol + 2 NAD(+) = (-)-matairesinol + 2 NADH + 2 H(+). In terms of biological role, oxidoreductase involved in lignan biosynthesis. Catalyzes the stereospecific conversion of (-)-secoisolariciresinol to (-)-matairesinol via a lactol intermediate. The chain is Secoisolariciresinol dehydrogenase from Forsythia intermedia (Border forsythia).